An 828-amino-acid chain; its full sequence is Periplasmic nitrate reductase (828 aa).

Positions 1–31 form a signal peptide, tat-type signal; the sequence is MKLSRRGFMKANAVAAAAAAAGLSVPGVARA. In terms of domain architecture, 4Fe-4S Mo/W bis-MGD-type spans 39-95; that stretch reads IKWDKAPCRFCGTGCGVLVGTQQGRVVACQGDPDAPVNRGLNCIKGYFLPKIMYGED. Residues Cys46, Cys49, Cys53, and Cys81 each coordinate [4Fe-4S] cluster. Mo-bis(molybdopterin guanine dinucleotide) is bound by residues Lys83, Gln150, Asn175, Cys179, 212 to 219, 243 to 247, 262 to 264, Met372, Gln376, Asn482, 508 to 509, Lys531, Asp558, and 718 to 727; these read WGANMAEM, STYQH, QSD, SD, and TGRVLEHWHT. Substrate is bound at residue Phe794. Mo-bis(molybdopterin guanine dinucleotide) is bound by residues Asn802 and Lys819.

Belongs to the prokaryotic molybdopterin-containing oxidoreductase family. NasA/NapA/NarB subfamily. As to quaternary structure, component of the periplasmic nitrate reductase NapAB complex composed of NapA and NapB. The cofactor is [4Fe-4S] cluster. Mo-bis(molybdopterin guanine dinucleotide) serves as cofactor. Predicted to be exported by the Tat system. The position of the signal peptide cleavage has not been experimentally proven.

It localises to the periplasm. The enzyme catalyses 2 Fe(II)-[cytochrome] + nitrate + 2 H(+) = 2 Fe(III)-[cytochrome] + nitrite + H2O. Catalytic subunit of the periplasmic nitrate reductase complex NapAB. Receives electrons from NapB and catalyzes the reduction of nitrate to nitrite. This Shigella dysenteriae serotype 1 (strain Sd197) protein is Periplasmic nitrate reductase.